The primary structure comprises 344 residues: Ketol-acid reductoisomerase (NADP(+)) (344 aa).

Residues 2–181 (EKIYYDADIS…GAGRAGILTT (180 aa)) form the KARI N-terminal Rossmann domain. Residues 25-28 (YGSQ), Arg-48, Ser-52, and 82-85 (DERQ) each bind NADP(+). His-107 is a catalytic residue. An NADP(+)-binding site is contributed by Gly-133. One can recognise a KARI C-terminal knotted domain in the interval 182–327 (TFREETETDL…RKLRSMMPFI (146 aa)). Positions 190, 194, 226, and 230 each coordinate Mg(2+). Position 251 (Ser-251) interacts with substrate.

Belongs to the ketol-acid reductoisomerase family. The cofactor is Mg(2+).

It carries out the reaction (2R)-2,3-dihydroxy-3-methylbutanoate + NADP(+) = (2S)-2-acetolactate + NADPH + H(+). It catalyses the reaction (2R,3R)-2,3-dihydroxy-3-methylpentanoate + NADP(+) = (S)-2-ethyl-2-hydroxy-3-oxobutanoate + NADPH + H(+). Its pathway is amino-acid biosynthesis; L-isoleucine biosynthesis; L-isoleucine from 2-oxobutanoate: step 2/4. It participates in amino-acid biosynthesis; L-valine biosynthesis; L-valine from pyruvate: step 2/4. Functionally, involved in the biosynthesis of branched-chain amino acids (BCAA). Catalyzes an alkyl-migration followed by a ketol-acid reduction of (S)-2-acetolactate (S2AL) to yield (R)-2,3-dihydroxy-isovalerate. In the isomerase reaction, S2AL is rearranged via a Mg-dependent methyl migration to produce 3-hydroxy-3-methyl-2-ketobutyrate (HMKB). In the reductase reaction, this 2-ketoacid undergoes a metal-dependent reduction by NADPH to yield (R)-2,3-dihydroxy-isovalerate. The chain is Ketol-acid reductoisomerase (NADP(+)) from Alicyclobacillus acidocaldarius subsp. acidocaldarius (strain ATCC 27009 / DSM 446 / BCRC 14685 / JCM 5260 / KCTC 1825 / NBRC 15652 / NCIMB 11725 / NRRL B-14509 / 104-IA) (Bacillus acidocaldarius).